A 295-amino-acid polypeptide reads, in one-letter code: N-acetylmuramic acid 6-phosphate etherase (295 aa).

The 164-residue stretch at 55 to 218 (AADALKQGGR…STGAMVKLGK (164 aa)) folds into the SIS domain. Residue Glu-83 is the Proton donor of the active site. The active site involves Glu-114.

The protein belongs to the GCKR-like family. MurNAc-6-P etherase subfamily. Homodimer.

The catalysed reaction is N-acetyl-D-muramate 6-phosphate + H2O = N-acetyl-D-glucosamine 6-phosphate + (R)-lactate. It participates in amino-sugar metabolism; 1,6-anhydro-N-acetylmuramate degradation. It functions in the pathway amino-sugar metabolism; N-acetylmuramate degradation. The protein operates within cell wall biogenesis; peptidoglycan recycling. Functionally, specifically catalyzes the cleavage of the D-lactyl ether substituent of MurNAc 6-phosphate, producing GlcNAc 6-phosphate and D-lactate. Together with AnmK, is also required for the utilization of anhydro-N-acetylmuramic acid (anhMurNAc) either imported from the medium or derived from its own cell wall murein, and thus plays a role in cell wall recycling. In Yersinia pseudotuberculosis serotype O:1b (strain IP 31758), this protein is N-acetylmuramic acid 6-phosphate etherase.